A 1404-amino-acid polypeptide reads, in one-letter code: DNA-directed RNA polymerase subunit beta' (1404 aa).

Positions 60, 62, 75, and 78 each coordinate Zn(2+). Mg(2+) is bound by residues Asp-449, Asp-451, and Asp-453. Residues Cys-778, Cys-852, Cys-859, and Cys-862 each contribute to the Zn(2+) site. The tract at residues 1381–1404 is disordered; it reads DRPLEEEEEEEIPQSIADDSDGDE. Residues 1384 to 1404 are compositionally biased toward acidic residues; that stretch reads LEEEEEEEIPQSIADDSDGDE.

Belongs to the RNA polymerase beta' chain family. The RNAP catalytic core consists of 2 alpha, 1 beta, 1 beta' and 1 omega subunit. When a sigma factor is associated with the core the holoenzyme is formed, which can initiate transcription. Mg(2+) is required as a cofactor. Requires Zn(2+) as cofactor.

The catalysed reaction is RNA(n) + a ribonucleoside 5'-triphosphate = RNA(n+1) + diphosphate. Functionally, DNA-dependent RNA polymerase catalyzes the transcription of DNA into RNA using the four ribonucleoside triphosphates as substrates. This Leptospira borgpetersenii serovar Hardjo-bovis (strain L550) protein is DNA-directed RNA polymerase subunit beta'.